The following is a 706-amino-acid chain: Polyribonucleotide nucleotidyltransferase (706 aa).

Mg(2+)-binding residues include Asp-487 and Asp-493. The region spanning 554-613 (PRIHTMKISSDKIKDVIGKGGAVIRALCEETGTTIEIEDDGTIKIAATEGAAAKEAIRRI) is the KH domain. The S1 motif domain occupies 623–691 (GRIYQGKVAR…RQGRVRLSMK (69 aa)).

It belongs to the polyribonucleotide nucleotidyltransferase family. In terms of assembly, component of the RNA degradosome, which is a multiprotein complex involved in RNA processing and mRNA degradation. Mg(2+) serves as cofactor.

Its subcellular location is the cytoplasm. It catalyses the reaction RNA(n+1) + phosphate = RNA(n) + a ribonucleoside 5'-diphosphate. In terms of biological role, involved in mRNA degradation. Catalyzes the phosphorolysis of single-stranded polyribonucleotides processively in the 3'- to 5'-direction. This Vibrio atlanticus (strain LGP32) (Vibrio splendidus (strain Mel32)) protein is Polyribonucleotide nucleotidyltransferase.